An 82-amino-acid polypeptide reads, in one-letter code: Small ribosomal subunit protein bS16 (82 aa).

It belongs to the bacterial ribosomal protein bS16 family.

In Crocosphaera subtropica (strain ATCC 51142 / BH68) (Cyanothece sp. (strain ATCC 51142)), this protein is Small ribosomal subunit protein bS16.